The chain runs to 232 residues: MDEARKLKIAAAAEALTYVKDGMRLGIGTGSTAEEFVRLLAEKVKGGFRVIGVPTSERTAKLCEELGVALTTLEETPHLDLTIDGADEVDGELSLIKGGGGALLREKIVAAASDSMIVIADQSKVVETLGRFPLPIEVNRFGLGATIRAIEAAAVKCGLAGPLNLRLKDGSPFLTDGGHYIVDASFGRIPDPKTLSDALFAIPGVVEHGLFIGLARAAIIAGTDGIRTMNRS.

Residues threonine 29–threonine 32, aspartate 84–aspartate 87, and lysine 97–glycine 100 contribute to the substrate site. The active-site Proton acceptor is glutamate 106. A substrate-binding site is contributed by lysine 124.

This sequence belongs to the ribose 5-phosphate isomerase family. In terms of assembly, homodimer.

It catalyses the reaction aldehydo-D-ribose 5-phosphate = D-ribulose 5-phosphate. It participates in carbohydrate degradation; pentose phosphate pathway; D-ribose 5-phosphate from D-ribulose 5-phosphate (non-oxidative stage): step 1/1. Its function is as follows. Catalyzes the reversible conversion of ribose-5-phosphate to ribulose 5-phosphate. The polypeptide is Ribose-5-phosphate isomerase A (Brucella suis biovar 1 (strain 1330)).